The following is a 246-amino-acid chain: Deoxycytidylate 5-hydroxymethyltransferase (246 aa).

Cys148 is an active-site residue.

The protein belongs to the thymidylate synthase family.

The catalysed reaction is dCMP + (6R)-5,10-methylene-5,6,7,8-tetrahydrofolate + H2O = 5-hydroxymethyl-dCMP + (6S)-5,6,7,8-tetrahydrofolate. This chain is Deoxycytidylate 5-hydroxymethyltransferase (42), found in Escherichia coli (Bacteriophage T2).